Here is a 201-residue protein sequence, read N- to C-terminus: Proteasome subunit beta type-2 (201 aa).

An N-acetylmethionine modification is found at methionine 1.

Belongs to the peptidase T1B family. The 26S proteasome consists of a 20S proteasome core and two 19S regulatory subunits. The 20S proteasome core is a barrel-shaped complex made of 28 subunits that are arranged in four stacked rings. The two outer rings are each formed by seven alpha subunits, and the two inner rings are formed by seven beta subunits. The proteolytic activity is exerted by three beta-subunits PSMB5, PSMB6 and PSMB7. Detected in liver (at protein level).

It is found in the cytoplasm. The protein localises to the nucleus. Its function is as follows. Non-catalytic component of the 20S core proteasome complex involved in the proteolytic degradation of most intracellular proteins. This complex plays numerous essential roles within the cell by associating with different regulatory particles. Associated with two 19S regulatory particles, forms the 26S proteasome and thus participates in the ATP-dependent degradation of ubiquitinated proteins. The 26S proteasome plays a key role in the maintenance of protein homeostasis by removing misfolded or damaged proteins that could impair cellular functions, and by removing proteins whose functions are no longer required. Associated with the PA200 or PA28, the 20S proteasome mediates ubiquitin-independent protein degradation. This type of proteolysis is required in several pathways including spermatogenesis (20S-PA200 complex) or generation of a subset of MHC class I-presented antigenic peptides (20S-PA28 complex). This is Proteasome subunit beta type-2 (Psmb2) from Mus musculus (Mouse).